A 101-amino-acid chain; its full sequence is Small ribosomal subunit protein uS14 (101 aa).

Residues M1–N10 show a composition bias toward basic and acidic residues. The tract at residues M1–K23 is disordered. The segment covering N11 to K23 has biased composition (basic residues).

In terms of assembly, part of the 30S ribosomal subunit. Contacts proteins S3 and S10.

In terms of biological role, binds 16S rRNA, required for the assembly of 30S particles and may also be responsible for determining the conformation of the 16S rRNA at the A site. This Rhodopseudomonas palustris (strain ATCC BAA-98 / CGA009) protein is Small ribosomal subunit protein uS14.